Consider the following 289-residue polypeptide: tRNA pseudouridine synthase A (289 aa).

Asp-67 serves as the catalytic Nucleophile. Tyr-125 is a binding site for substrate.

It belongs to the tRNA pseudouridine synthase TruA family. As to quaternary structure, homodimer.

It catalyses the reaction uridine(38/39/40) in tRNA = pseudouridine(38/39/40) in tRNA. Functionally, formation of pseudouridine at positions 38, 39 and 40 in the anticodon stem and loop of transfer RNAs. The sequence is that of tRNA pseudouridine synthase A from Prochlorococcus marinus (strain MIT 9211).